A 352-amino-acid polypeptide reads, in one-letter code: MSKNLTGVGGSLPVENVQVLAGKELKNLPNRYVRPELEHDDVVPIDNSLEIPVIDLSRLLDQQYACDELAKFHSACLDWGFFQLINHGVREEVIEKMKVDTEDFFRLPFKEKNAYRQLPNGMEGYGQAFVTSEEQKLDWADMHFLITKPVQERNMRFWPTSPTSFRETMEKYSMELQKVAMCLTGMMAKNLGLESEILTKPLRTVFNREDELLPSMSSCGEGLGLSPHSDATGLTLLIQVNEVNGLHIKKDEKWVPIKPILGAFVVNIGDVIEIMSNGIYKSIEHRAVINTDKERLSIAAFHDPEYGTKIGPLPDLVKENGVKYKTIDYEDYLIRSSNIKLDGKSLLDQMKL.

The 105-residue stretch at 200-304 (KPLRTVFNRE…RLSIAAFHDP (105 aa)) folds into the Fe2OG dioxygenase domain. Positions 228, 230, and 285 each coordinate Fe cation.

The protein belongs to the iron/ascorbate-dependent oxidoreductase family. As to quaternary structure, monomer. Requires Fe cation as cofactor.

It carries out the reaction (4-hydroxyphenyl)acetaldehyde + dopamine = (S)-norcoclaurine + H2O. With respect to regulation, inhibited by O-phenanthroline, but not by EDTA. Involved in the biosynthesis of the common precursor of all benzylisoquinoline alkaloids such as morphine, sanguinarine, codeine or berberine. Condenses dopamine and phenylacetaldehyde, 3,4-dihydrophenylacetaldehyde or 4-hydroxyphenylacetaldehyde. The protein is S-norcoclaurine synthase 1 (NCS1) of Coptis japonica (Japanese goldthread).